The primary structure comprises 227 residues: Phosphoglycolate phosphatase (227 aa).

Asp-8 acts as the Nucleophile in catalysis. The Mg(2+) site is built by Asp-8 and Asp-10. Lys-152 contacts substrate. Asp-175 and Asp-179 together coordinate Mg(2+).

The protein belongs to the archaeal SPP-like hydrolase family. The cofactor is Mg(2+).

It carries out the reaction 2-phosphoglycolate + H2O = glycolate + phosphate. In terms of biological role, catalyzes the dephosphorylation of 2-phosphoglycolate. In Halorubrum lacusprofundi (strain ATCC 49239 / DSM 5036 / JCM 8891 / ACAM 34), this protein is Phosphoglycolate phosphatase.